The sequence spans 2432 residues: uncharacterized protein (2432 aa).

The protein belongs to the IIV-6 261R/396L/443R family.

This is an uncharacterized protein from Invertebrate iridescent virus 6 (IIV-6).